The primary structure comprises 264 residues: Proliferating cell nuclear antigen 2 (264 aa).

A DNA-binding region spans residues 61-80; it reads RCDRNLSMGMNLGNMSKMLK.

This sequence belongs to the PCNA family. Homo- and heterotrimer. Interacts with POLH, ATXR5 and ATXR6.

The protein localises to the nucleus. Its function is as follows. This protein is an auxiliary protein of DNA polymerase delta and is involved in the control of eukaryotic DNA replication by increasing the polymerase's processibility during elongation of the leading strand. May be involved in UV resistance. The sequence is that of Proliferating cell nuclear antigen 2 (PCNA2) from Arabidopsis thaliana (Mouse-ear cress).